A 621-amino-acid chain; its full sequence is Nitrate reductase [NADH] 1 (621 aa).

Residues 249–324 enclose the Cytochrome b5 heme-binding domain; the sequence is GKEFTMSEVR…LDTYRIGELI (76 aa). Positions 284 and 307 each coordinate heme. Residues 361-473 enclose the FAD-binding FR-type domain; the sequence is REKIHCRLVG…KGPLGHVEYT (113 aa). Residues 413–416, 430–432, Phe435, 447–449, Ser497, and Thr500 contribute to the FAD site; these read RAYT, LVK, and LMT.

Belongs to the nitrate reductase family. In terms of assembly, homodimer. The cofactor is FAD. Requires heme as cofactor. Mo-molybdopterin is required as a cofactor.

The catalysed reaction is nitrite + NAD(+) + H2O = nitrate + NADH + H(+). Nitrate reductase is a key enzyme involved in the first step of nitrate assimilation in plants, fungi and bacteria. This chain is Nitrate reductase [NADH] 1, found in Zea mays (Maize).